The chain runs to 470 residues: MEEHYYVSIDIGSSSVKTIVGEKFHNGINVIGTGQTYTSGIKNGLIDDFDIARQAIKDTIKKASIASGVDIKEVFLKLPIIGTEVYDESNEIDFYEDTEINGSHIEKVLEGIREKNDVQETEVINVFPIRFIVDKENEVSDPKELIARHSLKVEAGVIAIQKSILINMIKCVEACGVDVLDVYSDAYNYGSILTATEKELGACVIDIGEDVTQVAFYERGELVDADSIEMAGRDITDDIAQGLNTSYETAEKVKHQYGHAFYDSASDQDIFTVEQVDSDETVQYTQKDLSDFIEARVEEIFFEVFDVLQDLGLTKVNGGFIVTGGSANLLGVKELLSDMVSEKVRIHTPSQMGIRKPEFSSAISTISSSIAFDELLDYVTINYHDNEETEEDVIDVKDKDNESKLGGFDWFKRKTNKKDTHENEVESTDEEIYQSEDNHQEHKQNHEHVQDKDKDKEESKFKKLMKSLFE.

The segment at 416–470 (NKKDTHENEVESTDEEIYQSEDNHQEHKQNHEHVQDKDKDKEESKFKKLMKSLFE) is disordered. Acidic residues predominate over residues 425–434 (VESTDEEIYQ). The span at 436-461 (EDNHQEHKQNHEHVQDKDKDKEESKF) shows a compositional bias: basic and acidic residues.

The protein belongs to the FtsA/MreB family. As to quaternary structure, self-interacts. Interacts with FtsZ.

The protein resides in the cell membrane. Cell division protein that is involved in the assembly of the Z ring. May serve as a membrane anchor for the Z ring. The chain is Cell division protein FtsA from Staphylococcus aureus (strain NCTC 8325 / PS 47).